Consider the following 202-residue polypeptide: MHNASDIQSALVPMVIEQTAKGERSYDIYSRLLKERIIFLVGQVEEHMANLIVAQLLFLESESPDKDIFLYINSPGGSVTAGMAIYDTMQFIKPNVSTVCIGQAASMGAFLLAGGEKGKRHCLPNSRVMIHQPLGGFQGQASDIAIHAKEILGIKNKLNQMLAEHTGQPLEVVERDTDRDNFMSATQAVEYGLVDSVMTKRG.

Ser106 functions as the Nucleophile in the catalytic mechanism. His131 is a catalytic residue.

The protein belongs to the peptidase S14 family. As to quaternary structure, fourteen ClpP subunits assemble into 2 heptameric rings which stack back to back to give a disk-like structure with a central cavity, resembling the structure of eukaryotic proteasomes.

It localises to the cytoplasm. It catalyses the reaction Hydrolysis of proteins to small peptides in the presence of ATP and magnesium. alpha-casein is the usual test substrate. In the absence of ATP, only oligopeptides shorter than five residues are hydrolyzed (such as succinyl-Leu-Tyr-|-NHMec, and Leu-Tyr-Leu-|-Tyr-Trp, in which cleavage of the -Tyr-|-Leu- and -Tyr-|-Trp bonds also occurs).. Cleaves peptides in various proteins in a process that requires ATP hydrolysis. Has a chymotrypsin-like activity. Plays a major role in the degradation of misfolded proteins. The polypeptide is ATP-dependent Clp protease proteolytic subunit (Shewanella baltica (strain OS223)).